A 274-amino-acid chain; its full sequence is Diaminopimelate epimerase (274 aa).

Asn11, Gln44, and Asn64 together coordinate substrate. Cys73 serves as the catalytic Proton donor. Substrate is bound by residues Gly74–Asn75, Asn157, Asn190, and Glu208–Arg209. Cys217 acts as the Proton acceptor in catalysis. Substrate is bound at residue Gly218–Ser219.

This sequence belongs to the diaminopimelate epimerase family. As to quaternary structure, homodimer.

The protein resides in the cytoplasm. It catalyses the reaction (2S,6S)-2,6-diaminopimelate = meso-2,6-diaminopimelate. It participates in amino-acid biosynthesis; L-lysine biosynthesis via DAP pathway; DL-2,6-diaminopimelate from LL-2,6-diaminopimelate: step 1/1. Its function is as follows. Catalyzes the stereoinversion of LL-2,6-diaminopimelate (L,L-DAP) to meso-diaminopimelate (meso-DAP), a precursor of L-lysine and an essential component of the bacterial peptidoglycan. The sequence is that of Diaminopimelate epimerase from Pectobacterium carotovorum subsp. carotovorum (strain PC1).